The following is a 369-amino-acid chain: Methylthioribose-1-phosphate isomerase (369 aa).

Met1 carries the N-acetylmethionine modification. At Arg158 the chain carries Omega-N-methylarginine. Asp248 serves as the catalytic Proton donor. Ser366 carries the post-translational modification Phosphoserine.

The protein belongs to the eIF-2B alpha/beta/delta subunits family. MtnA subfamily.

It localises to the cytoplasm. The protein localises to the nucleus. It carries out the reaction 5-(methylsulfanyl)-alpha-D-ribose 1-phosphate = 5-(methylsulfanyl)-D-ribulose 1-phosphate. The protein operates within amino-acid biosynthesis; L-methionine biosynthesis via salvage pathway; L-methionine from S-methyl-5-thio-alpha-D-ribose 1-phosphate: step 1/6. Catalyzes the interconversion of methylthioribose-1-phosphate (MTR-1-P) into methylthioribulose-1-phosphate (MTRu-1-P). The sequence is that of Methylthioribose-1-phosphate isomerase (Mri1) from Mus musculus (Mouse).